The following is a 142-amino-acid chain: Large ribosomal subunit protein uL11 (142 aa).

The protein belongs to the universal ribosomal protein uL11 family. Part of the ribosomal stalk of the 50S ribosomal subunit. Interacts with L10 and the large rRNA to form the base of the stalk. L10 forms an elongated spine to which L12 dimers bind in a sequential fashion forming a multimeric L10(L12)X complex. Post-translationally, one or more lysine residues are methylated.

Its function is as follows. Forms part of the ribosomal stalk which helps the ribosome interact with GTP-bound translation factors. The polypeptide is Large ribosomal subunit protein uL11 (Bradyrhizobium diazoefficiens (strain JCM 10833 / BCRC 13528 / IAM 13628 / NBRC 14792 / USDA 110)).